The primary structure comprises 198 residues: Large ribosomal subunit protein uL24c (198 aa).

Residues 1–50 (MATMSALQSSFTSLSLSPSSSFLGQRLISPISLSVTSPVKPAENPCLVLA) constitute a chloroplast transit peptide.

This sequence belongs to the universal ribosomal protein uL24 family. As to quaternary structure, part of the 50S ribosomal subunit.

It is found in the plastid. The protein localises to the chloroplast. Functionally, one of two assembly initiator proteins, it binds directly to the 5'-end of the 23S rRNA, where it nucleates assembly of the 50S subunit. Required for optimal plastid performance in terms of photosynthesis and growth. Required for the translation of plastid mRNAs. Plays a critical role in biosynthesis of thylakoid membrane proteins encoded by chloroplast genes. The sequence is that of Large ribosomal subunit protein uL24c (RPL24) from Arabidopsis thaliana (Mouse-ear cress).